Consider the following 31-residue polypeptide: Cytochrome b6-f complex subunit 6 (31 aa).

The helical transmembrane segment at 4 to 26 (ITSYFGFLLAASTITPALLIGLN) threads the bilayer.

The protein belongs to the PetL family. As to quaternary structure, the 4 large subunits of the cytochrome b6-f complex are cytochrome b6, subunit IV (17 kDa polypeptide, PetD), cytochrome f and the Rieske protein, while the 4 small subunits are PetG, PetL, PetM and PetN. The complex functions as a dimer.

It is found in the plastid. Its subcellular location is the chloroplast thylakoid membrane. Component of the cytochrome b6-f complex, which mediates electron transfer between photosystem II (PSII) and photosystem I (PSI), cyclic electron flow around PSI, and state transitions. PetL is important for photoautotrophic growth as well as for electron transfer efficiency and stability of the cytochrome b6-f complex. In Calycanthus floridus var. glaucus (Eastern sweetshrub), this protein is Cytochrome b6-f complex subunit 6.